Here is a 919-residue protein sequence, read N- to C-terminus: TRPM8 channel-associated factor 2 (919 aa).

In terms of domain architecture, Peptidase M60 spans 543 to 842 (DVWMSTGLYL…TYLQLQEVFG (300 aa)).

This sequence belongs to the TCAF family. Interacts with TRPM8 (via N-terminus and C-terminus domains); the interaction inhibits TRPM8 channel activity. Interacts with TRPV6.

The protein resides in the cell membrane. In terms of biological role, negatively regulates the plasma membrane cation channel TRPM8 activity. Involved in the recruitment of TRPM8 to the cell surface. Promotes prostate cancer cell migration stimulation in a TRPM8-dependent manner. The sequence is that of TRPM8 channel-associated factor 2 from Mus musculus (Mouse).